Here is a 389-residue protein sequence, read N- to C-terminus: Succinate--CoA ligase [ADP-forming] subunit beta (389 aa).

The ATP-grasp domain maps to 9 to 244 (KEILRKFGVA…LDEEDPAEVE (236 aa)). Residues Lys-46, 53-55 (GRG), Glu-99, Ala-102, and Glu-107 contribute to the ATP site. Residues Asn-199 and Asp-213 each coordinate Mg(2+). Substrate-binding positions include Asn-264 and 321-323 (GIM).

It belongs to the succinate/malate CoA ligase beta subunit family. As to quaternary structure, heterotetramer of two alpha and two beta subunits. The cofactor is Mg(2+).

It catalyses the reaction succinate + ATP + CoA = succinyl-CoA + ADP + phosphate. The enzyme catalyses GTP + succinate + CoA = succinyl-CoA + GDP + phosphate. It participates in carbohydrate metabolism; tricarboxylic acid cycle; succinate from succinyl-CoA (ligase route): step 1/1. Succinyl-CoA synthetase functions in the citric acid cycle (TCA), coupling the hydrolysis of succinyl-CoA to the synthesis of either ATP or GTP and thus represents the only step of substrate-level phosphorylation in the TCA. The beta subunit provides nucleotide specificity of the enzyme and binds the substrate succinate, while the binding sites for coenzyme A and phosphate are found in the alpha subunit. The sequence is that of Succinate--CoA ligase [ADP-forming] subunit beta from Paraburkholderia xenovorans (strain LB400).